We begin with the raw amino-acid sequence, 475 residues long: Ribulose bisphosphate carboxylase large chain (475 aa).

Residues 1–2 constitute a propeptide that is removed on maturation; sequence MS. Pro3 is subject to N-acetylproline. At Lys14 the chain carries N6,N6,N6-trimethyllysine. 2 residues coordinate substrate: Asn123 and Thr173. Catalysis depends on Lys175, which acts as the Proton acceptor. Position 177 (Lys177) interacts with substrate. Mg(2+) contacts are provided by Lys201, Asp203, and Glu204. Residue Lys201 is modified to N6-carboxylysine. The active-site Proton acceptor is the His294. Substrate contacts are provided by Arg295, His327, and Ser379.

Belongs to the RuBisCO large chain family. Type I subfamily. As to quaternary structure, heterohexadecamer of 8 large chains and 8 small chains; disulfide-linked. The disulfide link is formed within the large subunit homodimers. It depends on Mg(2+) as a cofactor. In terms of processing, the disulfide bond which can form in the large chain dimeric partners within the hexadecamer appears to be associated with oxidative stress and protein turnover.

The protein localises to the plastid. It is found in the chloroplast. The enzyme catalyses 2 (2R)-3-phosphoglycerate + 2 H(+) = D-ribulose 1,5-bisphosphate + CO2 + H2O. It carries out the reaction D-ribulose 1,5-bisphosphate + O2 = 2-phosphoglycolate + (2R)-3-phosphoglycerate + 2 H(+). Its function is as follows. RuBisCO catalyzes two reactions: the carboxylation of D-ribulose 1,5-bisphosphate, the primary event in carbon dioxide fixation, as well as the oxidative fragmentation of the pentose substrate in the photorespiration process. Both reactions occur simultaneously and in competition at the same active site. In Pinus pinea (Italian stone pine), this protein is Ribulose bisphosphate carboxylase large chain.